The primary structure comprises 354 residues: 3-isopropylmalate dehydrogenase (354 aa).

76–87 (GPRWDSAKERPE) contributes to the NAD(+) binding site. Residues arginine 94, arginine 104, arginine 130, and aspartate 215 each coordinate substrate. Mg(2+)-binding residues include aspartate 215, aspartate 239, and aspartate 243. Residue 273 to 285 (GSAPDIAGKNKAN) participates in NAD(+) binding.

The protein belongs to the isocitrate and isopropylmalate dehydrogenases family. LeuB type 1 subfamily. In terms of assembly, homodimer. The cofactor is Mg(2+). Mn(2+) serves as cofactor.

The protein resides in the cytoplasm. It catalyses the reaction (2R,3S)-3-isopropylmalate + NAD(+) = 4-methyl-2-oxopentanoate + CO2 + NADH. It participates in amino-acid biosynthesis; L-leucine biosynthesis; L-leucine from 3-methyl-2-oxobutanoate: step 3/4. In terms of biological role, catalyzes the oxidation of 3-carboxy-2-hydroxy-4-methylpentanoate (3-isopropylmalate) to 3-carboxy-4-methyl-2-oxopentanoate. The product decarboxylates to 4-methyl-2 oxopentanoate. This is 3-isopropylmalate dehydrogenase from Bacillus cereus (strain ATCC 10987 / NRS 248).